Consider the following 368-residue polypeptide: D-alanine--D-alanine ligase (368 aa).

The ATP-grasp domain occupies 145–348; that stretch reads KRLLQGAGLH…YQDLITTLIE (204 aa). Residue 175-230 coordinates ATP; it reads ADQLGLPLFIKPANQGSSVGVNKATTEAEFTAAIEEAFSYDHKVLIEAAIKGREIE. Mg(2+) contacts are provided by Asp-302, Glu-315, and Asn-317.

This sequence belongs to the D-alanine--D-alanine ligase family. Requires Mg(2+) as cofactor. The cofactor is Mn(2+).

The protein localises to the cytoplasm. It catalyses the reaction 2 D-alanine + ATP = D-alanyl-D-alanine + ADP + phosphate + H(+). It functions in the pathway cell wall biogenesis; peptidoglycan biosynthesis. In terms of biological role, cell wall formation. The chain is D-alanine--D-alanine ligase from Shouchella clausii (strain KSM-K16) (Alkalihalobacillus clausii).